The primary structure comprises 808 residues: Probable E3 ubiquitin-protein ligase hulA (808 aa).

Residues 1–112 (MGSNLPAQPN…QMGGDEMLTR (112 aa)) enclose the C2 domain. Disordered regions lie at residues 134-231 (NLST…GWER) and 275-346 (RRAH…YFVD). Polar residues-rich tracts occupy residues 142-159 (QANG…SSGL) and 171-198 (GPSQ…PSST). Low complexity predominate over residues 199 to 210 (VAPVNGAAAPGA). Residues 211 to 220 (SRTNLSSFED) are compositionally biased toward polar residues. Residues 223–256 (GRLPAGWERREDNLGRTYYVDHNTRTTTWTRPSS) form the WW 1 domain. Positions 275–288 (RRAHQSRMLPEDRT) are enriched in basic and acidic residues. Positions 289–303 (GASSPNLQENQQAQT) are enriched in polar residues. Positions 317 to 326 (ATGATTAGTG) are enriched in low complexity. 2 consecutive WW domains span residues 326 to 359 (GELP…DPRR) and 386 to 419 (GPLP…DPRL). In terms of domain architecture, HECT spans 475–808 (SASDLKKRLM…VEETLGFGQE (334 aa)). Cys776 acts as the Glycyl thioester intermediate in catalysis.

It belongs to the RSP5/NEDD4 family. Interacts with creD.

It localises to the cytoplasm. The enzyme catalyses S-ubiquitinyl-[E2 ubiquitin-conjugating enzyme]-L-cysteine + [acceptor protein]-L-lysine = [E2 ubiquitin-conjugating enzyme]-L-cysteine + N(6)-ubiquitinyl-[acceptor protein]-L-lysine.. Its pathway is protein modification; protein ubiquitination. Functionally, E3 ubiquitin-protein ligase which accepts ubiquitin from an E2 ubiquitin-conjugating enzyme in the form of a thioester and then directly transfers the ubiquitin to targeted substrates. Probably involved in the regulatory network controlling carbon source utilization. This is Probable E3 ubiquitin-protein ligase hulA (hulA) from Aspergillus terreus (strain NIH 2624 / FGSC A1156).